We begin with the raw amino-acid sequence, 392 residues long: MTESAAPSPRCVAAILLAGGRGLRAGFGRPKQLEWLCGKPVLRWSLDVLAGYPGLSGGVLVANHDVMAATYPLPEGWMAADPGVERQQSVANALSALTDWPDDAVVLVHDAARPGVDSAVVDRLLAALDGADAAIPVLPVPDTLVEAADGAAGAVVARDRLARVQTPQAFRLGTLRRAHAEASGAAATDDAQLVRSLGVSVATVEGDARLHKLTYAADMAILAGLLGTKDMMRTAVGMGYDVHRLVEGKPLWIGGIEIAHSHGLEGHSDADVGLHALTDAILGALGDGDIGDHFPPSDPQWRGAASHHFLSFAGERVAANGGRIGHLDLTIIAEAPRIGPHRVAIRDRIAEILAIPAGRVSVKATTTERLGFTGRREGIAAQAVATIQLPET.

2 2-C-methyl-D-erythritol 4-phosphate cytidylyltransferase regions span residues 1 to 234 and 1 to 235; these read MTES…MMRT and MTES…MRTA. Residues 235–392 are 2-C-methyl-D-erythritol 2,4-cyclodiphosphate synthase; sequence AVGMGYDVHR…AVATIQLPET (158 aa). A divalent metal cation is bound by residues D241 and H243. 4-CDP-2-C-methyl-D-erythritol 2-phosphate is bound by residues 241–243 and 267–268; these read DVH and HS. H275 contacts a divalent metal cation. 4-CDP-2-C-methyl-D-erythritol 2-phosphate-binding positions include 289-291, 365-368, F372, and R375; these read DIG and TTTE.

It in the N-terminal section; belongs to the IspD/TarI cytidylyltransferase family. IspD subfamily. This sequence in the C-terminal section; belongs to the IspF family. A divalent metal cation is required as a cofactor.

The catalysed reaction is 2-C-methyl-D-erythritol 4-phosphate + CTP + H(+) = 4-CDP-2-C-methyl-D-erythritol + diphosphate. It carries out the reaction 4-CDP-2-C-methyl-D-erythritol 2-phosphate = 2-C-methyl-D-erythritol 2,4-cyclic diphosphate + CMP. It participates in isoprenoid biosynthesis; isopentenyl diphosphate biosynthesis via DXP pathway; isopentenyl diphosphate from 1-deoxy-D-xylulose 5-phosphate: step 2/6. The protein operates within isoprenoid biosynthesis; isopentenyl diphosphate biosynthesis via DXP pathway; isopentenyl diphosphate from 1-deoxy-D-xylulose 5-phosphate: step 4/6. In terms of biological role, bifunctional enzyme that catalyzes the formation of 4-diphosphocytidyl-2-C-methyl-D-erythritol from CTP and 2-C-methyl-D-erythritol 4-phosphate (MEP) (IspD), and catalyzes the conversion of 4-diphosphocytidyl-2-C-methyl-D-erythritol 2-phosphate (CDP-ME2P) to 2-C-methyl-D-erythritol 2,4-cyclodiphosphate (ME-CPP) with a corresponding release of cytidine 5-monophosphate (CMP) (IspF). The sequence is that of Bifunctional enzyme IspD/IspF from Sphingopyxis alaskensis (strain DSM 13593 / LMG 18877 / RB2256) (Sphingomonas alaskensis).